The primary structure comprises 214 residues: Uracil phosphoribosyltransferase (214 aa).

5-phospho-alpha-D-ribose 1-diphosphate is bound by residues R81, R106, and 133-141 (DPMLATGNS). Residues I196 and 201–203 (GDA) contribute to the uracil site. D202 serves as a coordination point for 5-phospho-alpha-D-ribose 1-diphosphate.

It belongs to the UPRTase family. It depends on Mg(2+) as a cofactor.

It carries out the reaction UMP + diphosphate = 5-phospho-alpha-D-ribose 1-diphosphate + uracil. It functions in the pathway pyrimidine metabolism; UMP biosynthesis via salvage pathway; UMP from uracil: step 1/1. Allosterically activated by GTP. In terms of biological role, catalyzes the conversion of uracil and 5-phospho-alpha-D-ribose 1-diphosphate (PRPP) to UMP and diphosphate. This chain is Uracil phosphoribosyltransferase, found in Legionella pneumophila (strain Paris).